The primary structure comprises 191 residues: Transcriptional activator GvpE1 (191 aa).

The disordered stretch occupies residues S31–T51. K140–R145 is a DNA binding site. A leucine-zipper region spans residues E150–Q181.

Interacts with GvpD.

The protein localises to the cytoplasm. The amount of protein that accumulates is controlled by GvpD; GvpD causes a reduction in the amount of GvpE, preventing accumulation of excessive amounts of gas vesicles. In terms of biological role, plays a regulatory role in gas vesicle synthesis, activates transcription of the gvpA operon, and probably of the gvpD operon. Gas vesicles are hollow, gas filled proteinaceous nanostructures found in several microbial planktonic microorganisms. They allow positioning of halobacteria at the optimal depth for growth in the poorly aerated, shallow brine pools of their habitat. Functionally, expression of a 9.5 kb p-vac DNA fragment containing 2 divergently transcribed regions (gvpD-gvpE-gvpF-gvpG-gvpH-gvpI-gvpJ-gvpK-gvpL-gvpM and gvpA-gvpC-gvpN-gvpO) allows H.volcanii to produce gas vesicles. A similar region restores gas vesicle production in H.halobium without the p-vac locus, but it still has the c-vac locus. This Halobacterium salinarum (strain ATCC 700922 / JCM 11081 / NRC-1) (Halobacterium halobium) protein is Transcriptional activator GvpE1 (gvpE11).